The following is a 483-amino-acid chain: Regulatory protein ViaA (483 aa).

Belongs to the ViaA family. In terms of assembly, homodimer. Interacts with RavA.

The protein localises to the cytoplasm. Functionally, component of the RavA-ViaA chaperone complex, which may act on the membrane to optimize the function of some of the respiratory chains. ViaA stimulates the ATPase activity of RavA. In Salmonella typhi, this protein is Regulatory protein ViaA.